Consider the following 358-residue polypeptide: Aromatic amino acid aminotransferase (358 aa).

At lysine 214 the chain carries N6-(pyridoxal phosphate)lysine.

Belongs to the class-II pyridoxal-phosphate-dependent aminotransferase family. As to quaternary structure, homodimer. Pyridoxal 5'-phosphate is required as a cofactor.

The enzyme catalyses an aromatic L-alpha-amino acid + 2-oxoglutarate = an aromatic oxo-acid + L-glutamate. Its function is as follows. Aminotransferase that catalyzes the conversion of aromatic amino acids and 2-oxoglutarate into corresponding aromatic oxo acids and L-glutamate. This chain is Aromatic amino acid aminotransferase, found in Rhodococcus opacus (strain B4).